Reading from the N-terminus, the 190-residue chain is Probable nicotinate-nucleotide adenylyltransferase (190 aa).

This sequence belongs to the NadD family.

The catalysed reaction is nicotinate beta-D-ribonucleotide + ATP + H(+) = deamido-NAD(+) + diphosphate. It participates in cofactor biosynthesis; NAD(+) biosynthesis; deamido-NAD(+) from nicotinate D-ribonucleotide: step 1/1. Functionally, catalyzes the reversible adenylation of nicotinate mononucleotide (NaMN) to nicotinic acid adenine dinucleotide (NaAD). In Borrelia turicatae (strain 91E135), this protein is Probable nicotinate-nucleotide adenylyltransferase.